The sequence spans 300 residues: NAD kinase (300 aa).

The Proton acceptor role is filled by Asp-75. NAD(+)-binding positions include 75–76, 149–150, Arg-177, Asp-179, 190–195, Ala-214, and Gln-248; these read DG, ND, and TAYALS.

Belongs to the NAD kinase family. It depends on a divalent metal cation as a cofactor.

Its subcellular location is the cytoplasm. It carries out the reaction NAD(+) + ATP = ADP + NADP(+) + H(+). Involved in the regulation of the intracellular balance of NAD and NADP, and is a key enzyme in the biosynthesis of NADP. Catalyzes specifically the phosphorylation on 2'-hydroxyl of the adenosine moiety of NAD to yield NADP. The protein is NAD kinase of Burkholderia cenocepacia (strain HI2424).